Consider the following 322-residue polypeptide: UV DNA damage endonuclease (322 aa).

Belongs to the uve1/UvsE family.

In terms of biological role, component in a DNA repair pathway. Removal of UV LIGHT damaged nucleotides. Recognizes pyrimidine dimers and cleave a phosphodiester bond immediately 5' to the lesion. In Halalkalibacterium halodurans (strain ATCC BAA-125 / DSM 18197 / FERM 7344 / JCM 9153 / C-125) (Bacillus halodurans), this protein is UV DNA damage endonuclease.